Here is a 227-residue protein sequence, read N- to C-terminus: Cytochrome c oxidase subunit 2 (227 aa).

Over 1–14 (MAYPFQLGLQDATS) the chain is Mitochondrial intermembrane. Residues 15-45 (PIMEELTNFHDHTLMIVFLISSLVLYIISSM) traverse the membrane as a helical segment. The Mitochondrial matrix portion of the chain corresponds to 46-59 (LATKMTHTSTMDAQ). A helical transmembrane segment spans residues 60–87 (SMETIWTILPAVILVLIALPSLRILYMM). The Mitochondrial intermembrane portion of the chain corresponds to 88–227 (DEINNPVLTV…FFENWSASMI (140 aa)). Cu cation contacts are provided by His-161, Cys-196, Glu-198, Cys-200, His-204, and Met-207. Position 198 (Glu-198) interacts with Mg(2+).

Belongs to the cytochrome c oxidase subunit 2 family. In terms of assembly, component of the cytochrome c oxidase (complex IV, CIV), a multisubunit enzyme composed of 14 subunits. The complex is composed of a catalytic core of 3 subunits MT-CO1, MT-CO2 and MT-CO3, encoded in the mitochondrial DNA, and 11 supernumerary subunits COX4I, COX5A, COX5B, COX6A, COX6B, COX6C, COX7A, COX7B, COX7C, COX8 and NDUFA4, which are encoded in the nuclear genome. The complex exists as a monomer or a dimer and forms supercomplexes (SCs) in the inner mitochondrial membrane with NADH-ubiquinone oxidoreductase (complex I, CI) and ubiquinol-cytochrome c oxidoreductase (cytochrome b-c1 complex, complex III, CIII), resulting in different assemblies (supercomplex SCI(1)III(2)IV(1) and megacomplex MCI(2)III(2)IV(2)). Found in a complex with TMEM177, COA6, COX18, COX20, SCO1 and SCO2. Interacts with TMEM177 in a COX20-dependent manner. Interacts with COX20. Interacts with COX16. Requires Cu cation as cofactor.

It localises to the mitochondrion inner membrane. It carries out the reaction 4 Fe(II)-[cytochrome c] + O2 + 8 H(+)(in) = 4 Fe(III)-[cytochrome c] + 2 H2O + 4 H(+)(out). Component of the cytochrome c oxidase, the last enzyme in the mitochondrial electron transport chain which drives oxidative phosphorylation. The respiratory chain contains 3 multisubunit complexes succinate dehydrogenase (complex II, CII), ubiquinol-cytochrome c oxidoreductase (cytochrome b-c1 complex, complex III, CIII) and cytochrome c oxidase (complex IV, CIV), that cooperate to transfer electrons derived from NADH and succinate to molecular oxygen, creating an electrochemical gradient over the inner membrane that drives transmembrane transport and the ATP synthase. Cytochrome c oxidase is the component of the respiratory chain that catalyzes the reduction of oxygen to water. Electrons originating from reduced cytochrome c in the intermembrane space (IMS) are transferred via the dinuclear copper A center (CU(A)) of subunit 2 and heme A of subunit 1 to the active site in subunit 1, a binuclear center (BNC) formed by heme A3 and copper B (CU(B)). The BNC reduces molecular oxygen to 2 water molecules using 4 electrons from cytochrome c in the IMS and 4 protons from the mitochondrial matrix. The chain is Cytochrome c oxidase subunit 2 (MT-CO2) from Acomys wilsoni (Wilson's spiny mouse).